A 595-amino-acid polypeptide reads, in one-letter code: Arginine--tRNA ligase (595 aa).

Residues 132-142 (ANPTGPLHVGH) carry the 'HIGH' region motif.

Belongs to the class-I aminoacyl-tRNA synthetase family. As to quaternary structure, monomer.

It is found in the cytoplasm. The enzyme catalyses tRNA(Arg) + L-arginine + ATP = L-arginyl-tRNA(Arg) + AMP + diphosphate. This chain is Arginine--tRNA ligase, found in Cupriavidus pinatubonensis (strain JMP 134 / LMG 1197) (Cupriavidus necator (strain JMP 134)).